We begin with the raw amino-acid sequence, 1163 residues long: Integrin alpha-X (1163 aa).

The signal sequence occupies residues 1-19 (MTRTRAALLLFTALATSLG). The Extracellular segment spans residues 20–1107 (FNLDTEELTA…EKYKVHNPTP (1088 aa)). 2 FG-GAP repeats span residues 23-78 (DTEE…ACEP) and 79-138 (IGLQ…TQRL). Residue Asn-61 is glycosylated (N-linked (GlcNAc...) asparagine). The cysteines at positions 69 and 76 are disulfide-linked. Asn-89 carries N-linked (GlcNAc...) asparagine glycosylation. 2 disulfides stabilise this stretch: Cys-108/Cys-126 and Cys-116/Cys-145. Mg(2+) is bound by residues Asp-157, Ser-159, Ser-161, and Asp-259. The region spanning 165–339 (RNFATMMNFV…KEKIFAIEGT (175 aa)) is the VWFA domain. FG-GAP repeat units lie at residues 340 to 391 (ETTS…PTFI), 392 to 443 (NMSQ…SRQW), 444 to 504 (RMKA…WRRW), 507 to 565 (DAVL…PSIS), and 570 to 630 (QRIA…FIPA). N-linked (GlcNAc...) asparagine glycosylation occurs at Asn-392. Asp-466, Asp-468, Asp-470, and Asp-474 together coordinate Ca(2+). Cys-495 and Cys-506 are joined by a disulfide. Residues Asp-530, Asn-532, Asp-534, Asp-538, Asp-593, Asp-597, and Asp-601 each coordinate Ca(2+). 2 disulfide bridges follow: Cys-639-Cys-722 and Cys-655-Cys-712. 2 N-linked (GlcNAc...) asparagine glycosylation sites follow: Asn-697 and Asn-735. 2 disulfides stabilise this stretch: Cys-771-Cys-777 and Cys-848-Cys-863. Asn-899 and Asn-939 each carry an N-linked (GlcNAc...) asparagine glycan. 2 cysteine pairs are disulfide-bonded: Cys-998/Cys-1022 and Cys-1027/Cys-1032. The N-linked (GlcNAc...) asparagine glycan is linked to Asn-1050. The helical transmembrane segment at 1108-1128 (LIVGSSIGGLLLLALITAVLY) threads the bilayer. The Cytoplasmic segment spans residues 1129–1163 (KVGFFKRQYKEMMEEANGQIAPENGTQTPSPPSEK). A GFFKR motif motif is present at residues 1131 to 1135 (GFFKR).

Belongs to the integrin alpha chain family. As to quaternary structure, heterodimer of an alpha and a beta subunit. Alpha-X associates with beta-2. As to expression, predominantly expressed in monocytes and granulocytes.

It localises to the membrane. In terms of biological role, integrin alpha-X/beta-2 is a receptor for fibrinogen. It recognizes the sequence G-P-R in fibrinogen. It mediates cell-cell interaction during inflammatory responses. It is especially important in monocyte adhesion and chemotaxis. This chain is Integrin alpha-X (ITGAX), found in Homo sapiens (Human).